A 295-amino-acid polypeptide reads, in one-letter code: 4-diphosphocytidyl-2-C-methyl-D-erythritol kinase (295 aa).

The active site involves Lys-22. ATP is bound at residue 106–116; it reads PAGGGFGGGSS. Residue Asp-148 is part of the active site.

It belongs to the GHMP kinase family. IspE subfamily.

The catalysed reaction is 4-CDP-2-C-methyl-D-erythritol + ATP = 4-CDP-2-C-methyl-D-erythritol 2-phosphate + ADP + H(+). The protein operates within isoprenoid biosynthesis; isopentenyl diphosphate biosynthesis via DXP pathway; isopentenyl diphosphate from 1-deoxy-D-xylulose 5-phosphate: step 3/6. Functionally, catalyzes the phosphorylation of the position 2 hydroxy group of 4-diphosphocytidyl-2C-methyl-D-erythritol. This chain is 4-diphosphocytidyl-2-C-methyl-D-erythritol kinase, found in Xanthomonas campestris pv. campestris (strain 8004).